An 89-amino-acid polypeptide reads, in one-letter code: Alpha-ketoglutarate dehydrogenase subunit 4, mitochondrial (89 aa).

Belongs to the alpha-ketoglutarate dehydrogenase component 4 family. In terms of assembly, component of the 2-oxoglutarate dehydrogenase complex (OGDC), also called alpha-ketoglutarate dehydrogenase (KGDH) complex. The copmplex is composed of the catalytic subunits OGDH (2-oxoglutarate dehydrogenase kgd1; also called E1 subunit), DLST (dihydrolipoamide succinyltransferase kgd2; also called E2 subunit) and DLD (dihydrolipoamide dehydrogenase dld1; also called E3 subunit), and the assembly factor KGD4. Within OGDC, interacts (via N-terminus) with E3 subunit and (via C-terminus) with the complex core formed by E1 and E2 subunits.

It is found in the mitochondrion. Functionally, molecular adapter that is necessary to a form a stable 2-oxoglutarate dehydrogenase enzyme complex (OGDC). Required for incorporation of the E3 subunit (dld1) into the E1-E2 core (kgd1-kgd2) of mitochondrial OGDC, and acting as a stability factor for the fully assembled complex. The polypeptide is Alpha-ketoglutarate dehydrogenase subunit 4, mitochondrial (kgd4) (Schizosaccharomyces pombe (strain 972 / ATCC 24843) (Fission yeast)).